Reading from the N-terminus, the 568-residue chain is MTLRLSRRAYAEMYGPTTGDRIRLADTELLIEVERDHTLYGEEVKFGGGKVIRDGMGQSQLPAADVADTVITNAVILDHWGIVKADIAIKHGRIAAIGKAGNPDIQPGVTIAIGAATEIIAGEGLIVTAGGIDTHIHFISPQQIDEALASGVTTMIGGGTGPATGTNATTCTPGPWHMERMLQAADGWPINLGFLGKGNASRPQPLVEQIEAGAIGLKLHEDWGTTPAAIDNCLTVADDTDTQVAIHTDTLNEAGFVEATVAAFKGRTIHTYHTEGAGGGHAPDILKVCGEANVLPSSTNPTRPYTINTLDEHLDMLMVCHHLDPSIAEDLAFAESRIRRETIAAEDILHDLGALSMLSSDSQAMGRVGEVIIRTWQTAHKMKVQRGALAGDGARNDNFRAKRYVAKYTINPALTHGIAHEVGSIEPGKWADLVLWEPAFFGVKPAMIVKGGMIAVAQMGDPNASIPTPQPVHYREMFATRGGALARTSLTFVSQLALDAGIGARYGLAKRLVPVRGCRTVTKRDMIHNAWQPAIRVDPETYDVVADGALLTCEPAAVLPMAQRYFLF.

The 439-residue stretch at 130 to 568 (GGIDTHIHFI…LPMAQRYFLF (439 aa)) folds into the Urease domain. Positions 135, 137, and 218 each coordinate Ni(2+). Position 218 is an N6-carboxylysine (Lys-218). A substrate-binding site is contributed by His-220. Residues His-247 and His-273 each contribute to the Ni(2+) site. Residue His-321 is the Proton donor of the active site. Position 361 (Asp-361) interacts with Ni(2+).

This sequence belongs to the metallo-dependent hydrolases superfamily. Urease alpha subunit family. Heterotrimer of UreA (gamma), UreB (beta) and UreC (alpha) subunits. Three heterotrimers associate to form the active enzyme. Requires Ni cation as cofactor. Post-translationally, carboxylation allows a single lysine to coordinate two nickel ions.

It localises to the cytoplasm. The catalysed reaction is urea + 2 H2O + H(+) = hydrogencarbonate + 2 NH4(+). It functions in the pathway nitrogen metabolism; urea degradation; CO(2) and NH(3) from urea (urease route): step 1/1. This Burkholderia mallei (strain NCTC 10247) protein is Urease subunit alpha.